A 160-amino-acid chain; its full sequence is Cyclic pyranopterin monophosphate synthase (160 aa).

Residues 75–77 (MCH) and 116–117 (ME) contribute to the substrate site. Aspartate 131 is a catalytic residue.

This sequence belongs to the MoaC family. In terms of assembly, homohexamer; trimer of dimers.

The catalysed reaction is (8S)-3',8-cyclo-7,8-dihydroguanosine 5'-triphosphate = cyclic pyranopterin phosphate + diphosphate. It participates in cofactor biosynthesis; molybdopterin biosynthesis. Catalyzes the conversion of (8S)-3',8-cyclo-7,8-dihydroguanosine 5'-triphosphate to cyclic pyranopterin monophosphate (cPMP). The chain is Cyclic pyranopterin monophosphate synthase from Staphylococcus haemolyticus (strain JCSC1435).